Here is a 704-residue protein sequence, read N- to C-terminus: Polyribonucleotide nucleotidyltransferase (704 aa).

Mg(2+)-binding residues include Asp487 and Asp493. Residues 554-613 form the KH domain; sequence PRLLTIKIHPDKIREVIGKGGSTIQAITKETGTQIDIQDDGTIIIASVNAIAAQAAKSRI. The S1 motif domain occupies 623–691; that stretch reads GRIYEGKVAK…KQGRIRLSIK (69 aa).

This sequence belongs to the polyribonucleotide nucleotidyltransferase family. In terms of assembly, component of the RNA degradosome, which is a multiprotein complex involved in RNA processing and mRNA degradation. Requires Mg(2+) as cofactor.

It localises to the cytoplasm. It carries out the reaction RNA(n+1) + phosphate = RNA(n) + a ribonucleoside 5'-diphosphate. Involved in mRNA degradation. Catalyzes the phosphorolysis of single-stranded polyribonucleotides processively in the 3'- to 5'-direction. The protein is Polyribonucleotide nucleotidyltransferase of Xanthomonas euvesicatoria pv. vesicatoria (strain 85-10) (Xanthomonas campestris pv. vesicatoria).